A 134-amino-acid chain; its full sequence is Natriuretic peptides B (134 aa).

An N-terminal signal peptide occupies residues 1–26 (MDPQTAPSRALLLLLFLHLAFLGGRS). An O-linked (Xyl...) (chondroitin sulfate) serine glycan is attached at Ser-41. O-linked (HexNAc...) threonine; Partial glycosylation occurs at Thr-62. O-linked (HexNAc...) serine glycans are attached at residues Ser-63 and Ser-70. Thr-74 is a glycosylation site (O-linked (HexNAc...) threonine). Ser-79 carries O-linked (HexNAc...) serine glycosylation. Residue Thr-84 is glycosylated (O-linked (HexNAc...) threonine; Partial). Thr-97 is a glycosylation site (O-linked (HexNAc...) threonine). Residues Cys-112 and Cys-128 are joined by a disulfide bond.

The protein belongs to the natriuretic peptide family. Post-translationally, the precursor molecule is proteolytically cleaved by the endoproteases FURIN or CORIN at Arg-102 to produce brain natriuretic peptide 32 and NT-proBNP. This likely occurs after it has been secreted into the blood, either during circulation or in the target cells. CORIN also cleaves the precursor molecule at additional residues including Arg-99 and possibly Lys-105. In patients with heart failure, processing and degradation of natriuretic peptides B occurs but is delayed, possibly due to a decrease in enzyme level or activity of CORIN and DPP4. Undergoes further proteolytic cleavage by various proteases such as DPP4, MME and possibly FAP, to give rise to a variety of shorter peptides. Cleaved at Pro-104 by the prolyl endopeptidase FAP (seprase) activity (in vitro). Degraded by IDE. During IDE degradation, the resulting products initially increase the activation of NPR1 and can also stimulate NPR2 to produce cGMP before the fragments are completely degraded and inactivated by IDE (in vitro). In terms of processing, O-glycosylated on at least seven residues. In cardiomyocytes, glycosylation at Thr-97 is essential for the stability and processing of the extracellular natriuretic peptides B. Glycosylation, especially at Thr-97, may also be important for brain natriuretic peptide 32 stability and/or extracellular distribution. Glycosylation at Thr-97 appears to inhibit FURIN- or CORIN-mediated proteolytic processing, at least in HEK293 cells. As to expression, detected in the cardiac atria (at protein level). Detected in the kidney distal tubular cells (at protein level).

It localises to the secreted. Its function is as follows. Cardiac hormone that plays a key role in mediating cardio-renal homeostasis. May also function as a paracrine antifibrotic factor in the heart. Acts by specifically binding and stimulating NPR1 to produce cGMP, which in turn activates effector proteins that drive various biological responses. Involved in regulating the extracellular fluid volume and maintaining the fluid-electrolyte balance through natriuresis, diuresis, vasorelaxation, and inhibition of renin and aldosterone secretion. Binds the clearance receptor NPR3. In terms of biological role, may affect cardio-renal homeostasis. Able to promote the production of cGMP although its potency is very low compared to brain natriuretic peptide 32. Functionally, may have a role in cardio-renal homeostasis. Able to promote the production of cGMP. The polypeptide is Natriuretic peptides B (NPPB) (Homo sapiens (Human)).